Here is a 304-residue protein sequence, read N- to C-terminus: Acetyl-coenzyme A carboxylase carboxyl transferase subunit beta (304 aa).

The CoA carboxyltransferase N-terminal domain occupies 25–294 (LWIKCPETGE…KAIKRDTATE (270 aa)).

This sequence belongs to the AccD/PCCB family. As to quaternary structure, acetyl-CoA carboxylase is a heterohexamer composed of biotin carboxyl carrier protein (AccB), biotin carboxylase (AccC) and two subunits each of ACCase subunit alpha (AccA) and ACCase subunit beta (AccD).

It is found in the cytoplasm. It catalyses the reaction N(6)-carboxybiotinyl-L-lysyl-[protein] + acetyl-CoA = N(6)-biotinyl-L-lysyl-[protein] + malonyl-CoA. It functions in the pathway lipid metabolism; malonyl-CoA biosynthesis; malonyl-CoA from acetyl-CoA: step 1/1. Component of the acetyl coenzyme A carboxylase (ACC) complex. Biotin carboxylase (BC) catalyzes the carboxylation of biotin on its carrier protein (BCCP) and then the CO(2) group is transferred by the transcarboxylase to acetyl-CoA to form malonyl-CoA. This Sinorhizobium medicae (strain WSM419) (Ensifer medicae) protein is Acetyl-coenzyme A carboxylase carboxyl transferase subunit beta.